A 647-amino-acid polypeptide reads, in one-letter code: Transcriptional repressor XBP1 (647 aa).

2 stretches are compositionally biased toward polar residues: residues 138-148 (SNKTPVSASPT) and 156-170 (STAS…LTKN). Disordered regions lie at residues 138–170 (SNKT…LTKN) and 264–295 (LLSS…STSS). Residues 264 to 282 (LLSSSTSSPPKRRTSTGST) show a composition bias toward low complexity. The HTH APSES-type domain occupies 282 to 395 (TFLDANASSS…PDFPKDCESW (114 aa)). Positions 318–339 (CQSYKDFLINELGPDQIDLPNL) form a DNA-binding region, H-T-H motif. Residues 425 to 434 (TNFTSTAVAR) are compositionally biased toward low complexity. 3 disordered regions span residues 425-455 (TNFT…HSKA), 485-508 (KKNS…GPRD), and 612-647 (QNQR…NSKQ). Residues 435–445 (PRQKPRPRPRQ) show a composition bias toward basic residues. The segment covering 493–502 (SSTYTSQTSS) has biased composition (low complexity).

It localises to the nucleus. In terms of biological role, transcriptional repressor which binds to the consensus sequence 5'-GCCTCGA[G/A]G[C/A]-3'. Represses CLN1 transcription. The protein is Transcriptional repressor XBP1 (XBP1) of Saccharomyces cerevisiae (strain ATCC 204508 / S288c) (Baker's yeast).